A 338-amino-acid chain; its full sequence is O-methyltransferase 4 (338 aa).

Positions 184, 207, 230, 231, 244, and 245 each coordinate S-adenosyl-L-methionine. The Proton acceptor role is filled by H248.

The protein belongs to the class I-like SAM-binding methyltransferase superfamily. Cation-independent O-methyltransferase family. COMT subfamily.

It carries out the reaction (3,5-dichloro-2,4,6-trihydroxyphenyl)hexan-1-one + S-adenosyl-L-methionine = 1-(3,5-dichloro-2,6-dihydroxy-4-methoxyphenyl)hexan-1-one + S-adenosyl-L-homocysteine + H(+). In Dictyostelium discoideum (Social amoeba), this protein is O-methyltransferase 4 (omt4).